We begin with the raw amino-acid sequence, 204 residues long: Pneumococcal vaccine antigen A (204 aa).

It localises to the cell surface. This is Pneumococcal vaccine antigen A (pvaA) from Streptococcus pneumoniae serotype 4 (strain ATCC BAA-334 / TIGR4).